Consider the following 105-residue polypeptide: Thioredoxin (105 aa).

The 104-residue stretch at 2–105 (VKQIESKYAF…KLEATINELI (104 aa)) folds into the Thioredoxin domain. Lys-3 carries the N6-acetyllysine modification. An N6-succinyllysine modification is found at Lys-8. Catalysis depends on nucleophile residues Cys-32 and Cys-35. A disulfide bridge connects residues Cys-32 and Cys-35. An N6-acetyllysine modification is found at Lys-39. 2 positions are modified to S-nitrosocysteine: Cys-62 and Cys-69. An S-nitrosocysteine; alternate modification is found at Cys-73. Lys-94 is modified (N6-acetyllysine; alternate). Lys-94 carries the N6-succinyllysine; alternate modification.

This sequence belongs to the thioredoxin family. As to quaternary structure, homodimer; disulfide-linked. Interacts with TXNIP through the redox-active site. Interacts with MAP3K5 and CASP3. Interacts with APEX1; the interaction stimulates the FOS/JUN AP-1 DNA-binding activity in a redox-dependent manner. In terms of processing, in the fully reduced protein, both Cys-69 and Cys-73 are nitrosylated in response to nitric oxide (NO). When two disulfide bonds are present in the protein, only Cys-73 is nitrosylated. Cys-73 can serve as donor for nitrosylation of target proteins.

It is found in the nucleus. The protein localises to the cytoplasm. The protein resides in the secreted. Functionally, participates in various redox reactions through the reversible oxidation of its active center dithiol to a disulfide and catalyzes dithiol-disulfide exchange reactions. Plays a role in the reversible S-nitrosylation of cysteine residues in target proteins, and thereby contributes to the response to intracellular nitric oxide. Nitrosylates the active site Cys of CASP3 in response to nitric oxide (NO), and thereby inhibits caspase-3 activity. Induces the FOS/JUN AP-1 DNA binding activity in ionizing radiation (IR) cells through its oxidation/reduction status and stimulates AP-1 transcriptional activity. This chain is Thioredoxin (TXN), found in Ovis aries (Sheep).